A 254-amino-acid polypeptide reads, in one-letter code: rRNA N-glycosylase sapovaccarin-S2 (254 aa).

It belongs to the ribosome-inactivating protein family. Type 1 RIP subfamily. Expressed in seeds; most abundant in the perisperm.

The enzyme catalyses Endohydrolysis of the N-glycosidic bond at one specific adenosine on the 28S rRNA.. Its function is as follows. Exhibits N-glycosylase activity. Catalyzes the release of one adenine from a ribosome. Acts as a ribosome-inactivating protein and inhibits protein synthesis. Induces cell death in Huh-7 liver cells. May contribute to the protection against plant pests and predators or play a role in regulating the death of plant cells. The polypeptide is rRNA N-glycosylase sapovaccarin-S2 (Gypsophila vaccaria (Cow soapwort)).